A 445-amino-acid chain; its full sequence is MLSKKFTLRSHKSSITYIYPHPTIPSNVFTADSSGLIINWDLTIRRPKSSWQAHTDTILTISTIENNNSNNNGDGDGDGDGDYYLLTHSRDNTIKIWDLLKFSCLLEIPCNSLNFTNIEIFNDLLFTPSSINSNNLDVYKINPKNWQIKRLIFDFDIYKLVNKNENENGNIIQEIGSDTITNNRNDFGIIMQMKIIKTITTTTTNTTTTTTKENQEENGGDFIIYLGFESGDIVGLQLILPPARILSTTNKSTNTNTNTNDKTIIYNQSAKFILKYHNSFHVPNPIICLSNLNSILISSSITNKLIIHYNPIIEIKNLKYSGIQSIVYFKKFHQLIFGYWNGYIQYDDILIKQNLPKLGTTNNNNINNNIDTDINQEQSKLTKKLTFMTILNESKQEISQTSTTTTTTSGGDKSKYSSLIKSKRNFKLPLLLVGYEDGSIVAYNI.

WD repeat units lie at residues Ser-10–Ser-50, Ala-53–Glu-107, and Thr-406–Ile-445.

The protein belongs to the WD repeat ASA1 family. Component of the ASTRA chromatin remodeling machinery complex.

The protein resides in the nucleus. In terms of biological role, component of the ASTRA complex involved in chromatin remodeling. The sequence is that of ASTRA-associated protein 1 (ASA1) from Candida dubliniensis (strain CD36 / ATCC MYA-646 / CBS 7987 / NCPF 3949 / NRRL Y-17841) (Yeast).